A 277-amino-acid polypeptide reads, in one-letter code: Probable septum site-determining protein MinC (277 aa).

The disordered stretch occupies residues Ala137–Pro164. Residues Glu145–Pro164 show a composition bias toward pro residues.

It belongs to the MinC family. Interacts with MinD and FtsZ.

Functionally, cell division inhibitor that blocks the formation of polar Z ring septums. Rapidly oscillates between the poles of the cell to destabilize FtsZ filaments that have formed before they mature into polar Z rings. Prevents FtsZ polymerization. The chain is Probable septum site-determining protein MinC from Bordetella petrii (strain ATCC BAA-461 / DSM 12804 / CCUG 43448).